Reading from the N-terminus, the 90-residue chain is RNA-binding protein Hfq (90 aa).

In terms of domain architecture, Sm spans 9-68 (EPFLNTLRKEKVPVSIYLVNGIKLQGQIESFDQFVVLLRNNVNQMVYKHAISTIVPARRV).

It belongs to the Hfq family. As to quaternary structure, homohexamer.

Functionally, RNA chaperone that binds small regulatory RNA (sRNAs) and mRNAs to facilitate mRNA translational regulation in response to envelope stress, environmental stress and changes in metabolite concentrations. Also binds with high specificity to tRNAs. The protein is RNA-binding protein Hfq of Halorhodospira halophila (strain DSM 244 / SL1) (Ectothiorhodospira halophila (strain DSM 244 / SL1)).